Consider the following 435-residue polypeptide: Methionine aminopeptidase 2 (435 aa).

The tract at residues 57–77 is disordered; sequence AIDGDQAAAKKKKSKKKKKKA. The span at 65-77 shows a compositional bias: basic residues; the sequence is AKKKKSKKKKKKA. H188 lines the substrate pocket. D208, D219, and H288 together coordinate a divalent metal cation. A substrate-binding site is contributed by H296. E321 and E416 together coordinate a divalent metal cation.

Belongs to the peptidase M24A family. Methionine aminopeptidase eukaryotic type 2 subfamily. The cofactor is Co(2+). Requires Zn(2+) as cofactor. Mn(2+) is required as a cofactor. Fe(2+) serves as cofactor.

It is found in the cytoplasm. It carries out the reaction Release of N-terminal amino acids, preferentially methionine, from peptides and arylamides.. Its function is as follows. Cotranslationally removes the N-terminal methionine from nascent proteins. The N-terminal methionine is often cleaved when the second residue in the primary sequence is small and uncharged (Met-Ala-, Cys, Gly, Pro, Ser, Thr, or Val). This Clavispora lusitaniae (strain ATCC 42720) (Yeast) protein is Methionine aminopeptidase 2.